Here is a 432-residue protein sequence, read N- to C-terminus: Adenylosuccinate synthetase (432 aa).

GTP is bound by residues 13-19 and 41-43; these read GDEGKGK and GHT. D14 functions as the Proton acceptor in the catalytic mechanism. Residues D14 and G41 each contribute to the Mg(2+) site. IMP is bound by residues 14–17, 39–42, T130, R144, Q225, T240, and R304; these read DEGK and NAGH. The active-site Proton donor is the H42. Residue 300-306 participates in substrate binding; the sequence is AVTGRPR. GTP-binding positions include R306, 332-334, and 415-417; these read KLD and STG.

The protein belongs to the adenylosuccinate synthetase family. Homodimer. Mg(2+) is required as a cofactor.

It localises to the cytoplasm. It carries out the reaction IMP + L-aspartate + GTP = N(6)-(1,2-dicarboxyethyl)-AMP + GDP + phosphate + 2 H(+). It functions in the pathway purine metabolism; AMP biosynthesis via de novo pathway; AMP from IMP: step 1/2. Plays an important role in the de novo pathway of purine nucleotide biosynthesis. Catalyzes the first committed step in the biosynthesis of AMP from IMP. The sequence is that of Adenylosuccinate synthetase from Mannheimia succiniciproducens (strain KCTC 0769BP / MBEL55E).